Here is a 496-residue protein sequence, read N- to C-terminus: 1-aminocyclopropane-1-carboxylate synthase 2 (496 aa).

The substrate site is built by Glu55 and Tyr93. Residue Lys279 is modified to N6-(pyridoxal phosphate)lysine. Residues Ser483, Ser488, and Ser491 each carry the phosphoserine modification.

Belongs to the class-I pyridoxal-phosphate-dependent aminotransferase family. In terms of assembly, homodimer and heterodimer. In vivo, the relevance of heterodimerization with other ACS enzymes is however unsure. Interacts with GRF3. Requires pyridoxal 5'-phosphate as cofactor. Phosphorylated on serine residue by MAP kinase (MPK6). Post-translationally, may be processed at its C-terminus. In terms of tissue distribution, high in developing leaves and in flowers. Expressed in roots and siliques.

The catalysed reaction is S-adenosyl-L-methionine = 1-aminocyclopropane-1-carboxylate + S-methyl-5'-thioadenosine + H(+). It participates in alkene biosynthesis; ethylene biosynthesis via S-adenosyl-L-methionine; ethylene from S-adenosyl-L-methionine: step 1/2. Functionally, 1-aminocyclopropane-1-carboxylate synthase (ACS) enzymes catalyze the conversion of S-adenosyl-L-methionine (SAM) into 1-aminocyclopropane-1-carboxylate (ACC), a direct precursor of ethylene. The sequence is that of 1-aminocyclopropane-1-carboxylate synthase 2 (ACS2) from Arabidopsis thaliana (Mouse-ear cress).